Here is a 409-residue protein sequence, read N- to C-terminus: 2,3-bisphosphoglycerate-independent phosphoglycerate mutase (409 aa).

Residues 160–179 (ITDADPKHEGNKPKTVKPLD) are disordered.

Belongs to the BPG-independent phosphoglycerate mutase family. A-PGAM subfamily.

It carries out the reaction (2R)-2-phosphoglycerate = (2R)-3-phosphoglycerate. It functions in the pathway carbohydrate degradation; glycolysis; pyruvate from D-glyceraldehyde 3-phosphate: step 3/5. Catalyzes the interconversion of 2-phosphoglycerate and 3-phosphoglycerate. The protein is 2,3-bisphosphoglycerate-independent phosphoglycerate mutase of Methanosphaera stadtmanae (strain ATCC 43021 / DSM 3091 / JCM 11832 / MCB-3).